We begin with the raw amino-acid sequence, 362 residues long: EARP-interacting protein 1 (362 aa).

WD repeat units follow at residues 61–108, 206–246, 250–290, and 319–359; these read HPAG…RTLE, AHIH…SALT, PHAH…SEQQ, and EHED…KYAL.

This sequence belongs to the WD repeat EIPR1 family. In terms of tissue distribution, expressed in the hypodermis and the pharynx.

It localises to the cytoplasm. Plays a role in the trafficking of cargo to dense-core vesicles, probably through association with the endosome-associated recycling protein (EARP) complex. Important for neuronal function. This Caenorhabditis elegans protein is EARP-interacting protein 1.